The primary structure comprises 338 residues: UDP-glucose 4-epimerase (338 aa).

Residues 11-12, 31-36, 58-59, 80-84, Asn-99, Ser-124, Tyr-149, Lys-153, and Phe-178 contribute to the NAD(+) site; these read FI, DNLCNS, DI, and FAGLK. Positions 124 and 149 each coordinate substrate. The active-site Proton acceptor is Tyr-149. Substrate is bound by residues Asn-179, 199 to 200, 216 to 218, Arg-231, and 292 to 295; these read NL, SVF, and RAGD.

This sequence belongs to the NAD(P)-dependent epimerase/dehydratase family. In terms of assembly, homodimer. Requires NAD(+) as cofactor.

The enzyme catalyses UDP-alpha-D-glucose = UDP-alpha-D-galactose. It functions in the pathway carbohydrate metabolism; galactose metabolism. Involved in the metabolism of galactose. Plays an essential role in the incorporation of galactose into meningococcal lipopolysaccharide surface molecules, which are important for pathogenesis. Catalyzes the conversion of UDP-galactose (UDP-Gal) to UDP-glucose (UDP-Glc) through a mechanism involving the transient reduction of NAD. This Neisseria gonorrhoeae protein is UDP-glucose 4-epimerase (galE).